A 421-amino-acid polypeptide reads, in one-letter code: Gamma-glutamyl phosphate reductase (421 aa).

The protein belongs to the gamma-glutamyl phosphate reductase family.

It is found in the cytoplasm. It catalyses the reaction L-glutamate 5-semialdehyde + phosphate + NADP(+) = L-glutamyl 5-phosphate + NADPH + H(+). The protein operates within amino-acid biosynthesis; L-proline biosynthesis; L-glutamate 5-semialdehyde from L-glutamate: step 2/2. Its function is as follows. Catalyzes the NADPH-dependent reduction of L-glutamate 5-phosphate into L-glutamate 5-semialdehyde and phosphate. The product spontaneously undergoes cyclization to form 1-pyrroline-5-carboxylate. This is Gamma-glutamyl phosphate reductase from Stutzerimonas stutzeri (strain A1501) (Pseudomonas stutzeri).